Reading from the N-terminus, the 266-residue chain is MRKNTYAMRYVAGQPAERILPLGSFASIGQALPAGEPLSSEERIRILVWNIFKQQRAEWLSVLKNYGKDAHLVLLQEAQTTPELVQFATANYLAADQVPAFVLPQHPSGVMTLSAAHPVYCCPLREREPILRLAKSALVTVYPLPDTRLLMVVNVHAVNFSLGVDVYSKQLLPIGDQIAHHSGPVIMAGDFNAWSRPRMNALYRFAREMSLRQVRFTDDQRRRAFGRPLDFVFYRGLNVNEASVLVTRASDHNPLLVEFSPGKPEQ.

Belongs to the UPF0294 family.

The protein localises to the cytoplasm. This chain is UPF0294 protein YafD, found in Salmonella typhi.